The primary structure comprises 442 residues: PTS system oligo-beta-mannoside-specific EIIC component (442 aa).

The PTS EIIC type-3 domain occupies 5–411; it reads ISQFLVPIAG…LIVFVIWFPF (407 aa). 11 helical membrane passes run 28–48, 67–87, 97–117, 138–157, 177–197, 205–225, 228–248, 286–306, 329–349, 365–385, and 391–411; these read AFML…LTNL, FGIA…FGIG, EAVF…PFII, GMFL…RRIV, FAAL…NVMV, MHDV…SGII, LIAV…QIII, TVGM…LIFM, PIIF…WVLA, LVPP…INGI, and IMGG…WFPF.

It localises to the cell membrane. Functionally, the phosphoenolpyruvate-dependent sugar phosphotransferase system (sugar PTS), a major carbohydrate active transport system, catalyzes the phosphorylation of incoming sugar substrates concomitantly with their translocation across the cell membrane. The enzyme II GmuABC PTS system is involved in the transport of oligo-glucomannans such as cellobiose or mannobiose. This Bacillus subtilis (strain 168) protein is PTS system oligo-beta-mannoside-specific EIIC component.